Here is a 160-residue protein sequence, read N- to C-terminus: ATP synthase subunit delta, mitochondrial (160 aa).

A mitochondrion-targeting transit peptide spans 1–22; it reads MFRQSLRSIARTRTGTIGVRTY.

In terms of assembly, F-type ATP synthases have 2 components, the catalytic core F(1) and the membrane-embedded component F(0), linked together by a central stalk and a peripheral stalk. The central stalk, also called rotor shaft, is often seen as part of F(1). The peripheral stalk is seen as part of F(0). F(0) contains the membrane channel next to the rotor. F-type ATP synthases form dimers but each monomer functions independently in ATP generation. The dimer consists of 18 different polypeptides: ATP1 (subunit alpha, part of F(1), 3 molecules per monomer), ATP2 (subunit beta, part of F(1), 3 molecules per monomer), ATP3 (subunit gamma, part of the central stalk), ATP4 (subunit b, part of the peripheral stalk), ATP5/OSCP (subunit 5/OSCP, part of the peripheral stalk), ATP6 (subunit a, part of the peripheral stalk), ATP7 (subunit d, part of the peripheral stalk), ATP8 (subunit 8, part of the peripheral stalk), OLI1 (subunit c, part of the rotor, 10 molecules per monomer), ATP14 (subunit h, part of the peripheral stalk), ATP15 (subunit epsilon, part of the central stalk), ATP16 (subunit delta, part of the central stalk), ATP17 (subunit f, part of the peripheral stalk), ATP18 (subunit i/j, part of the peripheral stalk). Dimer-specific subunits are ATP19 (subunit k, at interface between monomers), ATP20 (subunit g, at interface between monomers), TIM11 (subunit e, at interface between monomers). Also contains subunit L.

Its subcellular location is the mitochondrion inner membrane. Mitochondrial membrane ATP synthase (F(1)F(0) ATP synthase or Complex V) produces ATP from ADP in the presence of a proton gradient across the membrane which is generated by electron transport complexes of the respiratory chain. F-type ATP synthases consist of two structural domains, F(1) - containing the extramembraneous catalytic core, and F(0) - containing the membrane proton channel, linked together by a central stalk and a peripheral stalk. During catalysis, ATP synthesis in the catalytic domain of F(1) is coupled via a rotary mechanism of the central stalk subunits to proton translocation. Part of the complex F(1) domain and the central stalk which is part of the complex rotary element. Rotation of the central stalk against the surrounding alpha/ATP1(3)beta/ATP2(3) subunits leads to hydrolysis of ATP in three separate catalytic sites on the beta/ATP2 subunits. The protein is ATP synthase subunit delta, mitochondrial of Pichia angusta (Yeast).